The following is a 313-amino-acid chain: Serine/threonine-protein phosphatase CPPED1 (313 aa).

Residue Ser2 is modified to Phosphoserine. Residues 47–250 are catalytic; sequence KAWATGDCDN…AVFSGHYHRN (204 aa). Asp53, Asp90, Asn127, and His246 together coordinate a divalent metal cation. The residue at position 293 (Ser293) is a Phosphoserine.

Belongs to the metallophosphoesterase superfamily. CPPED1 family. A divalent metal cation serves as cofactor.

The protein resides in the cytoplasm. It catalyses the reaction O-phospho-L-seryl-[protein] + H2O = L-seryl-[protein] + phosphate. The enzyme catalyses O-phospho-L-threonyl-[protein] + H2O = L-threonyl-[protein] + phosphate. Protein phosphatase that dephosphorylates AKT family kinase specifically at 'Ser-473', blocking cell cycle progression and promoting cell apoptosis. May play an inhibitory role in glucose uptake by adipocytes. This Bos taurus (Bovine) protein is Serine/threonine-protein phosphatase CPPED1 (CPPED1).